A 326-amino-acid polypeptide reads, in one-letter code: dTDP-4-dehydro-6-deoxy-D-allose reductase (326 aa).

Residues 15–21 (GALGFIG) and 129–132 (MSSS) contribute to the NAD(+) site. Catalysis depends on Tyr-160, which acts as the Proton donor/acceptor. NAD(+)-binding positions include Lys-164 and 187 to 190 (PGNV).

The protein belongs to the NAD(P)-dependent epimerase/dehydratase family.

The enzyme catalyses dTDP-6-deoxy-alpha-D-allose + NAD(+) = dTDP-4-dehydro-6-deoxy-alpha-D-allose + NADH + H(+). It catalyses the reaction dTDP-6-deoxy-alpha-D-allose + NADP(+) = dTDP-4-dehydro-6-deoxy-alpha-D-allose + NADPH + H(+). In terms of biological role, catalyzes the stereospecific reduction of the C-4 keto group of dTDP-4-dehydro-6-deoxy-D-allose, leading to dTDP-6-deoxy-D-allose, an intermediate in the biosynthesis of the mycinose moiety of dihydrochalcomycin (GERI-155) antibiotic. Cannot directly reduce dTDP-4-dehydro-6-deoxyglucose, and thus acts after the epimerization step catalyzed by GerF. The polypeptide is dTDP-4-dehydro-6-deoxy-D-allose reductase (gerKI) (Streptomyces sp).